The chain runs to 610 residues: Glutamine--fructose-6-phosphate aminotransferase [isomerizing] (610 aa).

C2 acts as the Nucleophile; for GATase activity in catalysis. Positions 2 to 221 constitute a Glutamine amidotransferase type-2 domain; sequence CGIVGAVAQR…DGDVVDLQLA (220 aa). 2 consecutive SIS domains span residues 286–426 and 459–600; these read AYKV…TRGR and WADR…VDKP. Residue K605 is the For Fru-6P isomerization activity of the active site.

In terms of assembly, homodimer.

The protein localises to the cytoplasm. The enzyme catalyses D-fructose 6-phosphate + L-glutamine = D-glucosamine 6-phosphate + L-glutamate. Its function is as follows. Catalyzes the first step in hexosamine metabolism, converting fructose-6P into glucosamine-6P using glutamine as a nitrogen source. This Bordetella pertussis (strain Tohama I / ATCC BAA-589 / NCTC 13251) protein is Glutamine--fructose-6-phosphate aminotransferase [isomerizing].